The following is a 1807-amino-acid chain: Integrin beta-4 (1807 aa).

An N-terminal signal peptide occupies residues 1–27; that stretch reads MAGLCSSPWVKLLLAVVLSAGLPGNMA. The Extracellular segment spans residues 28–713; it reads NRCKKAQVKS…KKKDCLPAPS (686 aa). One can recognise a PSI domain in the interval 29–73; the sequence is RCKKAQVKSCTECIRVDKSCAYCTDELFKERRCNTQADVLAAGCR. 8 disulfide bridges follow: Cys30/Cys48, Cys38/Cys456, Cys41/Cys61, Cys51/Cys72, Cys245/Cys288, Cys458/Cys477, Cys469/Cys480, and Cys482/Cys491. Residues 131 to 340 form the VWFA domain; the sequence is DLYILMDFSN…SYYEKLHKYF (210 aa). Mg(2+) contacts are provided by Ser139 and Ser141. Ca(2+) is bound by residues Ser141, Asp144, Asp145, and Asp176. The involved in NRG1- and IGF1-binding stretch occupies residues 194–199; the sequence is WPNSDP. 4 residues coordinate Ca(2+): Asn228, Asp230, Pro232, and Glu233. Mg(2+) is bound at residue Glu233. An N-linked (GlcNAc...) asparagine glycan is attached at Asn327. Position 350 (Glu350) interacts with Ca(2+). I-EGF domains follow at residues 458–492, 493–538, 539–575, and 576–617; these read CELQ…KTCN, CSTG…HFCE, YDNF…RSCD, and CPLS…TTCE. Asn492 is a glycosylation site (N-linked (GlcNAc...) asparagine). 11 disulfides stabilise this stretch: Cys493–Cys521, Cys504–Cys519, Cys513–Cys524, Cys526–Cys537, Cys544–Cys558, Cys552–Cys563, Cys565–Cys574, Cys576–Cys599, Cys583–Cys597, Cys591–Cys602, and Cys604–Cys616. Residue Asn580 is glycosylated (N-linked (GlcNAc...) asparagine). Residue Asn619 is glycosylated (N-linked (GlcNAc...) asparagine). 4 disulfides stabilise this stretch: Cys628–Cys673, Cys634–Cys653, Cys637–Cys650, and Cys682–Cys708. N-linked (GlcNAc...) asparagine glycosylation is present at Asn697. The helical transmembrane segment at 714–734 threads the bilayer; sequence WWLIPLLIFLLLLLVLLLLLC. The interval 734-751 is palmitoylated on several cysteines; sequence CWKYCACCKACLGLLPCC. The Cytoplasmic portion of the chain corresponds to 735–1807; the sequence is WKYCACCKAC…THMDQQFFQT (1073 aa). Ser773, Ser1071, and Ser1121 each carry phosphoserine. Positions 981–1086 constitute a Calx-beta domain; the sequence is VNITIIKEQA…QVRRFQVQLS (106 aa). Residues 1119-1141 form a disordered region; sequence SASPPLPRGDLGAPQNPNAKAAG. 2 Fibronectin type-III domains span residues 1131-1220 and 1224-1323; these read APQN…THQE and EPGR…TQPK. 3 positions are modified to phosphoserine: Ser1386, Ser1389, and Ser1405. The residue at position 1418 (Thr1418) is a Phosphothreonine. Residue Ser1425 is modified to Phosphoserine. A Phosphothreonine modification is found at Thr1514. Fibronectin type-III domains lie at 1514–1609 and 1627–1723; these read TPTR…VHPQ and APGP…SQDG. Position 1776 is a phosphoserine (Ser1776).

It belongs to the integrin beta chain family. As to quaternary structure, heterodimer of an alpha and a beta subunit. Beta-4 associates with alpha-6. Interacts (via cytoplasmic region) with COL17A1 (via cytoplasmic region). Interacts (via cytoplasmic region) with DST isoform 3 (via N-terminus). Interacts (via cytoplasmic domain) with DST (via N-terminus). Interacts with RAC1. ITGA6:ITGB4 is found in a ternary complex with NRG1 and ERBB3. ITGA6:ITGB4 is found in a ternary complex with IGF1 and IGF1R. ITGA6:ITGB4 interacts with IGF2. Interacts with TMEM268; this interaction prevents ITGB4 degradation. Palmitoylated by DHHC3 at several cysteines of the membrane-proximal region, enhancing stability and cell surface expression. Palmitoylation also promotes secondary association with tertaspanins.

The protein resides in the cell membrane. It is found in the cell junction. The protein localises to the hemidesmosome. Integrin alpha-6/beta-4 is a receptor for laminin. It plays a critical structural role in the hemidesmosome of epithelial cells. Is required for the regulation of keratinocyte polarity and motility. ITGA6:ITGB4 binds to NRG1 (via EGF domain) and this binding is essential for NRG1-ERBB signaling. ITGA6:ITGB4 binds to IGF1 and this binding is essential for IGF1 signaling. ITGA6:ITGB4 binds to IGF2 and this binding is essential for IGF2 signaling. The sequence is that of Integrin beta-4 (Itgb4) from Rattus norvegicus (Rat).